The primary structure comprises 407 residues: Imidazolonepropionase (407 aa).

Residues His68 and His70 each coordinate Fe(3+). Residues His68 and His70 each coordinate Zn(2+). Residues Arg77, Tyr140, and His173 each contribute to the 4-imidazolone-5-propanoate site. Tyr140 lines the N-formimidoyl-L-glutamate pocket. Residue His238 participates in Fe(3+) binding. Residue His238 coordinates Zn(2+). A 4-imidazolone-5-propanoate-binding site is contributed by Gln241. A Fe(3+)-binding site is contributed by Asp313. Asp313 serves as a coordination point for Zn(2+). Residues Asn315 and Gly317 each coordinate N-formimidoyl-L-glutamate. Thr318 contributes to the 4-imidazolone-5-propanoate binding site.

The protein belongs to the metallo-dependent hydrolases superfamily. HutI family. Zn(2+) serves as cofactor. The cofactor is Fe(3+).

The protein resides in the cytoplasm. The catalysed reaction is 4-imidazolone-5-propanoate + H2O = N-formimidoyl-L-glutamate. Its pathway is amino-acid degradation; L-histidine degradation into L-glutamate; N-formimidoyl-L-glutamate from L-histidine: step 3/3. Its function is as follows. Catalyzes the hydrolytic cleavage of the carbon-nitrogen bond in imidazolone-5-propanoate to yield N-formimidoyl-L-glutamate. It is the third step in the universal histidine degradation pathway. This is Imidazolonepropionase from Burkholderia mallei (strain ATCC 23344).